A 195-amino-acid chain; its full sequence is Probable septum site-determining protein MinC (195 aa).

Belongs to the MinC family. Interacts with MinD and FtsZ.

Cell division inhibitor that blocks the formation of polar Z ring septums. Rapidly oscillates between the poles of the cell to destabilize FtsZ filaments that have formed before they mature into polar Z rings. Prevents FtsZ polymerization. The protein is Probable septum site-determining protein MinC of Helicobacter pylori (strain G27).